The chain runs to 352 residues: MAKRKLNRRQRWRIEKIQAEKRDRANRRTDQQEILVADDLGDEQHGVITAHFGQQVEVESADGPGAENRTTRRCHFRATLEQLVVGDKVIWQPPKSEGLGVVVAIEPRDTVLKRPDMYGNLKPVAANVEQMLVVFAPLPTPSSSLLDRYLVAAELSGIAATLVLNKADLIDDTLRPFVDELSDMYRHLGYPVLEVCAHQREGLTPLHEALAGKTSVFVGQSGVGKSSLINGVLPEADLQVGELSSNSGLGQHTTVTARLVHLPTGGQLIDSPGIREFGLWHIGEDDLLHGYRELSELAGYCKFRNCSHRNEPGCALILAAQNGDIDEERLANFYQISDTLNEDGRERYSTDS.

Residues 109 to 277 (DTVLKRPDMY…LIDSPGIREF (169 aa)) form the CP-type G domain. GTP-binding positions include 165–168 (NKAD) and 219–227 (GQSGVGKSS). 4 residues coordinate Zn(2+): Cys-301, Cys-306, His-308, and Cys-314.

This sequence belongs to the TRAFAC class YlqF/YawG GTPase family. RsgA subfamily. Monomer. Associates with 30S ribosomal subunit, binds 16S rRNA. Zn(2+) is required as a cofactor.

It localises to the cytoplasm. Its function is as follows. One of several proteins that assist in the late maturation steps of the functional core of the 30S ribosomal subunit. Helps release RbfA from mature subunits. May play a role in the assembly of ribosomal proteins into the subunit. Circularly permuted GTPase that catalyzes slow GTP hydrolysis, GTPase activity is stimulated by the 30S ribosomal subunit. In Alcanivorax borkumensis (strain ATCC 700651 / DSM 11573 / NCIMB 13689 / SK2), this protein is Small ribosomal subunit biogenesis GTPase RsgA.